The primary structure comprises 57 residues: MAVPKKKTSKSKRDKRRATWRHKAAVEAQKALSLGKSILTGRSTFVYPTPEEEDEEE.

A disordered region spans residues 1-23; that stretch reads MAVPKKKTSKSKRDKRRATWRHK.

Belongs to the bacterial ribosomal protein bL32 family.

This chain is Large ribosomal subunit protein bL32, found in Nostoc sp. (strain PCC 7120 / SAG 25.82 / UTEX 2576).